The sequence spans 1563 residues: Superkiller complex protein 3 (1563 aa).

An N-acetylserine modification is found at S2. 22 TPR repeats span residues 6-39, 40-73, 157-196, 272-305, 307-339, 386-419, 420-453, 455-492, 493-527, 564-597, 598-631, 632-665, 633-665, 673-713, 790-824, 826-860, 861-894, 980-1013, 1020-1053, 1055-1084, 1325-1358, and 1399-1432; these read VKTALKSARDAIRNKEYKEALKHCKTVLKQEKNN, YNAWVFIGVAAAELEQPDQAQGAYKKAAELEPEQ, YELWRKLSQLLAENIEDQNNETQQMLLTAFENALDLADNI, GPGLIGLGIIALQDKKYEDAVRHLTEGLKESPVC, AGWCHLAEAQVKMHRPKEAILSCNQALKTIDNF, PGLLVLQGLACLNTGAVDKATKIMEDLVTSYPDL, AEAHALEGRVHFTKKDYVQAEVSFQRALEKDAEV, EYHYQLGLTYWFMGEETRKDKTKALTHFLKAARLDAHM, GKVFCYLGHYYRDVAGDRNRARGCYRKAFELDDND, KWAWLRRGLYHLKAGQHSQAVADLQAALRADPKD, CNCWESLGEAYLSRGGYTTALKSFMKASELNPDS, TYSVFKVAAIQQILGRYSEAIAQYQLIIKMKEDY, YSVFKVAAIQQILGRYSEAIAQYQLIIKMKEDY, GECH…RADV, VQHLAETGSSMSDLTELLEKSLHCLKKAVRLDSNN, LHWNALGVVACYRGVGNYALAQHCFIKSIQAEQIN, AAAWTNLGVLYLATENIEQAHEAFKMAQSLDPSY, ASAFTMLGYLNEHLQLKKEAAEAYQRATTLLHSA, NVAVRNWGRLLCSIGDYDRAIQAFKSTPLVELED, IGFALALFMKGLYKESGSAYERALAVCKSE, KWSFSQVVTGLIDTGKTSEAESLCTQSLKSNPDQ, and VPAWQWLAQVYQSQGMMGAAEMCYRKSLQVASQQ.

The protein belongs to the SKI3 family. In terms of assembly, component of the SKI complex which consists of SKIC2, SKIC3 and SKIC8. Interacts with PAF1.

Its subcellular location is the cytoplasm. It is found in the nucleus. Component of the SKI complex, a multiprotein complex that assists the RNA-degrading exosome during the mRNA decay and quality-control pathways. The SKI complex catalyzes mRNA extraction from 80S ribosomal complexes in the 3'-5' direction and channels mRNA to the cytosolic exosome for degradation. SKI-mediated extraction of mRNA from stalled ribosomes allow binding of the Pelota-HBS1L complex and subsequent ribosome disassembly by ABCE1 for ribosome recycling. In the nucleus, the SKI complex associates with transcriptionally active genes in a manner dependent on PAF1 complex (PAF1C). The chain is Superkiller complex protein 3 from Mus musculus (Mouse).